The sequence spans 350 residues: DNA-directed RNA polymerase subunit alpha (350 aa).

Residues 1–226 (MLISQRPTLS…ELFGLARELN (226 aa)) are alpha N-terminal domain (alpha-NTD). Residues 241-350 (ADHIASFALP…NQDYAETEQL (110 aa)) are alpha C-terminal domain (alpha-CTD). A disordered region spans residues 328–350 (GTWTSDAGYDLDDNQDYAETEQL). A compositionally biased stretch (acidic residues) spans 336–350 (YDLDDNQDYAETEQL).

It belongs to the RNA polymerase alpha chain family. In terms of assembly, homodimer. The RNAP catalytic core consists of 2 alpha, 1 beta, 1 beta' and 1 omega subunit. When a sigma factor is associated with the core the holoenzyme is formed, which can initiate transcription.

It carries out the reaction RNA(n) + a ribonucleoside 5'-triphosphate = RNA(n+1) + diphosphate. In terms of biological role, DNA-dependent RNA polymerase catalyzes the transcription of DNA into RNA using the four ribonucleoside triphosphates as substrates. The polypeptide is DNA-directed RNA polymerase subunit alpha (Mycolicibacterium smegmatis (strain ATCC 700084 / mc(2)155) (Mycobacterium smegmatis)).